Consider the following 84-residue polypeptide: Apoptosis inhibitor Rv3654c (84 aa).

An N-terminal signal peptide occupies residues 1–39; the sequence is MVARHRAQAAADLASLAAAARLPSGLAAACARATLVARA.

Interacts with human polypyrimidine tract binding protein-associated splicing factor (PSF).

Its subcellular location is the secreted. The protein resides in the host cytoplasm. Effector protein that participates in the suppression of macrophage apoptosis by blocking the extrinsic pathway. Recognizes the host polypyrimidine tract binding protein-associated splicing factor (PSF), which probably leads to its cleavage, diminishing the level of caspase-8 in macrophages. In Mycobacterium tuberculosis (strain ATCC 25618 / H37Rv), this protein is Apoptosis inhibitor Rv3654c.